The chain runs to 118 residues: Small ribosomal subunit protein uS13 (118 aa).

The disordered stretch occupies residues arginine 92–lysine 118.

This sequence belongs to the universal ribosomal protein uS13 family. As to quaternary structure, part of the 30S ribosomal subunit. Forms a loose heterodimer with protein S19. Forms two bridges to the 50S subunit in the 70S ribosome.

Functionally, located at the top of the head of the 30S subunit, it contacts several helices of the 16S rRNA. In the 70S ribosome it contacts the 23S rRNA (bridge B1a) and protein L5 of the 50S subunit (bridge B1b), connecting the 2 subunits; these bridges are implicated in subunit movement. Contacts the tRNAs in the A and P-sites. The chain is Small ribosomal subunit protein uS13 from Yersinia enterocolitica serotype O:8 / biotype 1B (strain NCTC 13174 / 8081).